The primary structure comprises 292 residues: Phosphatidylglycerol--prolipoprotein diacylglyceryl transferase (292 aa).

Transmembrane regions (helical) follow at residues 25 to 45, 70 to 90, 102 to 122, 138 to 158, 193 to 213, 217 to 237, and 255 to 275; these read ITLH…WWYA, FVVW…VLVW, IIAV…IIIA, FDII…CNFI, FMEG…FKAF, GTVS…SEVY, and GFTY…YLLL. Arg-153 serves as a coordination point for a 1,2-diacyl-sn-glycero-3-phospho-(1'-sn-glycerol).

The protein belongs to the Lgt family.

Its subcellular location is the cell inner membrane. It carries out the reaction L-cysteinyl-[prolipoprotein] + a 1,2-diacyl-sn-glycero-3-phospho-(1'-sn-glycerol) = an S-1,2-diacyl-sn-glyceryl-L-cysteinyl-[prolipoprotein] + sn-glycerol 1-phosphate + H(+). The protein operates within protein modification; lipoprotein biosynthesis (diacylglyceryl transfer). Catalyzes the transfer of the diacylglyceryl group from phosphatidylglycerol to the sulfhydryl group of the N-terminal cysteine of a prolipoprotein, the first step in the formation of mature lipoproteins. The polypeptide is Phosphatidylglycerol--prolipoprotein diacylglyceryl transferase (Bartonella tribocorum (strain CIP 105476 / IBS 506)).